We begin with the raw amino-acid sequence, 378 residues long: Acetylornithine deacetylase (378 aa).

Residue histidine 76 coordinates Zn(2+). The active site involves aspartate 78. Residue aspartate 108 participates in Zn(2+) binding. Glutamate 140 is an active-site residue. Zn(2+) contacts are provided by glutamate 141, glutamate 165, and histidine 351.

This sequence belongs to the peptidase M20A family. ArgE subfamily. As to quaternary structure, homodimer. It depends on Zn(2+) as a cofactor. The cofactor is Co(2+). Glutathione serves as cofactor.

The protein resides in the cytoplasm. It catalyses the reaction N(2)-acetyl-L-ornithine + H2O = L-ornithine + acetate. The protein operates within amino-acid biosynthesis; L-arginine biosynthesis; L-ornithine from N(2)-acetyl-L-ornithine (linear): step 1/1. Its function is as follows. Catalyzes the hydrolysis of the amide bond of N(2)-acetylated L-amino acids. Cleaves the acetyl group from N-acetyl-L-ornithine to form L-ornithine, an intermediate in L-arginine biosynthesis pathway, and a branchpoint in the synthesis of polyamines. The protein is Acetylornithine deacetylase of Vibrio atlanticus (strain LGP32) (Vibrio splendidus (strain Mel32)).